The primary structure comprises 330 residues: Polyprenyl transferase dpfgC (330 aa).

Asn34 carries N-linked (GlcNAc...) asparagine glycosylation. A run of 7 helical transmembrane segments spans residues 105 to 125 (ALCV…NDWI), 146 to 166 (VTTT…WGVL), 175 to 192 (VLKH…YPFG), 199 to 219 (KLMI…AIPG), 237 to 257 (CLPL…AYSY), 273 to 293 (NIAG…IILA), and 310 to 330 (NFIL…LTSA).

This sequence belongs to the UbiA prenyltransferase family. Mg(2+) is required as a cofactor.

Its subcellular location is the membrane. Its pathway is secondary metabolite biosynthesis; terpenoid biosynthesis. In terms of biological role, polyprenyl transferase; part of the gene cluster that mediates the biosynthesis of diterpenoid pyrones. The first step of the pathway is the synthesis of the alpha-pyrone moiety by the polyketide synthase dpfgA via condensation of one acetyl-CoA starter unit with 3 malonyl-CoA units and 2 methylations. The alpha-pyrone is then combined with geranylgeranyl pyrophosphate (GGPP) formed by the GGPP synthase dpfgD through the action of the prenyltransferase dpfgC to yield a linear alpha-pyrone diterpenoid. Subsequent steps in the diterpenoid pyrone biosynthetic pathway involve the decalin core formation, which is initiated by the epoxidation of the C10-C11 olefin by the FAD-dependent oxidoreductase dpfgE, and is followed by a cyclization cascade catalyzed by the terpene cyclase dpfgB. The short chain dehydrogenase/reductase dpfgG then oxidizes the 8S hydroxy group to a ketone and the short chain dehydrogenase/reductase dpfgH reduces the ketone to the 8R hydroxy group to yield higginsianin B. Higginsianin B is further methylated by the methyltransferase dpfgI to produce the intermediate named FDDP B. The cytochrome P450 monooxygenase dfgpJ then catalyzes a three-step oxidation at C-27 to generate a carboxylic acid as well as C-26 hydroxylation. Finally, methyltransferase dpfgK methylates the carboxylic acid generated by dpfgJ, yielding the final diterpenoid pyrones from the pathway which were named FDDP D and FDDP E. The polypeptide is Polyprenyl transferase dpfgC (Gibberella zeae (strain ATCC MYA-4620 / CBS 123657 / FGSC 9075 / NRRL 31084 / PH-1) (Wheat head blight fungus)).